Here is an 87-residue protein sequence, read N- to C-terminus: Sec-independent protein translocase protein TatA (87 aa).

The chain crosses the membrane as a helical span at residues 1–21 (MGSFSITHWLILLVVVVVVFG). The tract at residues 56–87 (VLDHDAGTNPPNITGTQSDTTSANKVDDTHNV) is disordered. Polar residues predominate over residues 64–79 (NPPNITGTQSDTTSAN).

The protein belongs to the TatA/E family. As to quaternary structure, the Tat system comprises two distinct complexes: a TatABC complex, containing multiple copies of TatA, TatB and TatC subunits, and a separate TatA complex, containing only TatA subunits. Substrates initially bind to the TatABC complex, which probably triggers association of the separate TatA complex to form the active translocon.

The protein localises to the cell inner membrane. In terms of biological role, part of the twin-arginine translocation (Tat) system that transports large folded proteins containing a characteristic twin-arginine motif in their signal peptide across membranes. TatA could form the protein-conducting channel of the Tat system. The chain is Sec-independent protein translocase protein TatA from Psychrobacter arcticus (strain DSM 17307 / VKM B-2377 / 273-4).